Consider the following 183-residue polypeptide: Deoxyuridine 5'-triphosphate nucleotidohydrolase (183 aa).

Substrate-binding positions include 67–69, Asn-80, 84–86, and Lys-94; these read RSG and TID. Residues 138 to 183 form a disordered region; sequence RAEGGFGSTGGHAGLDPASGTSGQVAEGGPTGGNRYASVVSDREGQ. Over residues 141–150 the composition is skewed to gly residues; sequence GGFGSTGGHA.

This sequence belongs to the dUTPase family. Requires Mg(2+) as cofactor.

The enzyme catalyses dUTP + H2O = dUMP + diphosphate + H(+). It functions in the pathway pyrimidine metabolism; dUMP biosynthesis; dUMP from dCTP (dUTP route): step 2/2. In terms of biological role, this enzyme is involved in nucleotide metabolism: it produces dUMP, the immediate precursor of thymidine nucleotides and it decreases the intracellular concentration of dUTP so that uracil cannot be incorporated into DNA. The polypeptide is Deoxyuridine 5'-triphosphate nucleotidohydrolase (Streptomyces coelicolor (strain ATCC BAA-471 / A3(2) / M145)).